Consider the following 596-residue polypeptide: Inactive metallocarboxypeptidase ecm14 (596 aa).

The first 26 residues, M1 to A26, serve as a signal peptide directing secretion. Positions V27–A190 are excised as a propeptide. An N-linked (GlcNAc...) asparagine glycan is attached at N114. Residues N220–L540 form the Peptidase M14 domain. Residues H285 and E288 each coordinate Zn(2+). Substrate contacts are provided by residues H285–E288, R343, and D360–R361. A disulfide bridge connects residues C354 and C376. Residue N400 is glycosylated (N-linked (GlcNAc...) asparagine). A Zn(2+)-binding site is contributed by H416. Residue S417–Y418 participates in substrate binding.

The protein belongs to the peptidase M14 family. It depends on Zn(2+) as a cofactor.

Its subcellular location is the vacuole. The protein resides in the secreted. Its function is as follows. Inactive carboxypeptidase that may play a role in cell wall organization and biogenesis. This is Inactive metallocarboxypeptidase ecm14 (ecm14) from Sclerotinia sclerotiorum (strain ATCC 18683 / 1980 / Ss-1) (White mold).